Reading from the N-terminus, the 381-residue chain is PqqA peptide cyclase (381 aa).

The Radical SAM core domain occupies 12-228 (VGPPLWLLAE…AEYRQRLAAE (217 aa)). [4Fe-4S] cluster-binding residues include cysteine 26, cysteine 30, and cysteine 33.

It belongs to the radical SAM superfamily. PqqE family. In terms of assembly, interacts with PqqD. The interaction is necessary for activity of PqqE. [4Fe-4S] cluster serves as cofactor.

The catalysed reaction is [PQQ precursor protein] + S-adenosyl-L-methionine = E-Y cross-linked-[PQQ precursor protein] + 5'-deoxyadenosine + L-methionine + H(+). The protein operates within cofactor biosynthesis; pyrroloquinoline quinone biosynthesis. In terms of biological role, catalyzes the cross-linking of a glutamate residue and a tyrosine residue in the PqqA protein as part of the biosynthesis of pyrroloquinoline quinone (PQQ). The chain is PqqA peptide cyclase from Pseudomonas aeruginosa (strain LESB58).